We begin with the raw amino-acid sequence, 421 residues long: Dihydroorotase (421 aa).

Positions 59 and 61 each coordinate Zn(2+). Substrate contacts are provided by residues 61 to 63 (HLR) and N93. The Zn(2+) site is built by D150, H177, and H230. N276 is a substrate binding site. D303 lines the Zn(2+) pocket. D303 is an active-site residue. Residue H307 participates in substrate binding.

Belongs to the metallo-dependent hydrolases superfamily. DHOase family. Class I DHOase subfamily. The cofactor is Zn(2+).

The catalysed reaction is (S)-dihydroorotate + H2O = N-carbamoyl-L-aspartate + H(+). It functions in the pathway pyrimidine metabolism; UMP biosynthesis via de novo pathway; (S)-dihydroorotate from bicarbonate: step 3/3. Functionally, catalyzes the reversible cyclization of carbamoyl aspartate to dihydroorotate. This Desulfotalea psychrophila (strain LSv54 / DSM 12343) protein is Dihydroorotase.